Here is a 249-residue protein sequence, read N- to C-terminus: Metallo-beta-lactamase type 2 (249 aa).

Positions 1-22 (MLKRLKGLLVLALGFTGLQVFG) are cleaved as a signal peptide. Zn(2+)-binding residues include His98, His100, Asp102, His161, and Cys180. Substrate is bound at residue Lys183. His222 lines the Zn(2+) pocket.

This sequence belongs to the metallo-beta-lactamase superfamily. Class-B beta-lactamase family. As to quaternary structure, monomer. Zn(2+) serves as cofactor.

It localises to the periplasm. It catalyses the reaction a beta-lactam + H2O = a substituted beta-amino acid. Confers resistance to the different beta-lactams antibiotics (penicillin, cephalosporin and carbapenem) via the hydrolysis of the beta-lactam ring. This Elizabethkingia meningoseptica (Chryseobacterium meningosepticum) protein is Metallo-beta-lactamase type 2 (blaB5).